The sequence spans 777 residues: Serine/threonine-protein kinase PTK2 (777 aa).

Positions 21 to 174 (NKLRGNNDST…ISSGSASSTN (154 aa)) are disordered. The segment covering 30–41 (TPAAAPAPVPTK) has biased composition (low complexity). Composition is skewed to polar residues over residues 50 to 61 (AHISRSASTNTP) and 83 to 133 (RRST…SQHM). A compositionally biased stretch (low complexity) spans 149–172 (SSVRGSSYSRHGSGSHISSGSASS). Positions 222 to 529 (DKDNKTIGSG…MEDLFNDPWF (308 aa)) constitute a Protein kinase domain. ATP-binding positions include 228–236 (IGSGGSSEV) and lysine 252. Aspartate 355 serves as the catalytic Proton acceptor. 2 disordered regions span residues 564-705 (DAHP…EITE) and 728-764 (SVSG…KKVV). 2 stretches are compositionally biased toward polar residues: residues 575–592 (TDTN…AGTH) and 648–672 (TNTT…TNEF). Residues 677-694 (NATTTDNDNVNTKATTAD) are compositionally biased toward low complexity. The span at 744-756 (NRSIHSNATSTGT) shows a compositional bias: polar residues.

It belongs to the protein kinase superfamily. Ser/Thr protein kinase family.

The enzyme catalyses L-seryl-[protein] + ATP = O-phospho-L-seryl-[protein] + ADP + H(+). The catalysed reaction is L-threonyl-[protein] + ATP = O-phospho-L-threonyl-[protein] + ADP + H(+). In Candida glabrata (strain ATCC 2001 / BCRC 20586 / JCM 3761 / NBRC 0622 / NRRL Y-65 / CBS 138) (Yeast), this protein is Serine/threonine-protein kinase PTK2 (PTK2).